Here is a 628-residue protein sequence, read N- to C-terminus: Chaperone protein HtpG (628 aa).

Positions 1–334 (MTTTDTASET…SEDLPLNLSR (334 aa)) are a; substrate-binding. The interval 335–550 (EMLQNNPQLA…GFGPDRELEK (216 aa)) is b. The c stretch occupies residues 551 to 628 (MLARANKGAA…LVLRGLVAHG (78 aa)).

The protein belongs to the heat shock protein 90 family. In terms of assembly, homodimer.

The protein resides in the cytoplasm. Functionally, molecular chaperone. Has ATPase activity. The polypeptide is Chaperone protein HtpG (Rhodopseudomonas palustris (strain BisB5)).